A 335-amino-acid polypeptide reads, in one-letter code: Ubiquinone biosynthesis protein COQ4, mitochondrial (335 aa).

The transit peptide at 1–10 directs the protein to the mitochondrion; that stretch reads MLRLSLLRST. Zn(2+) contacts are provided by histidine 210, aspartate 211, histidine 214, and glutamate 226.

Belongs to the COQ4 family. As to quaternary structure, component of a multi-subunit COQ enzyme complex, composed of at least COQ3, COQ4, COQ5, COQ6, COQ7 and COQ9. Interacts with COQ3. Zn(2+) serves as cofactor.

Its subcellular location is the mitochondrion inner membrane. The enzyme catalyses 4-hydroxy-3-methoxy-5-(all-trans-hexaprenyl)benzoate + H(+) = 2-methoxy-6-(all-trans-hexaprenyl)phenol + CO2. It participates in cofactor biosynthesis; ubiquinone biosynthesis. Its function is as follows. Lyase that catalyzes the C1-decarboxylation of 4-hydroxy-3-methoxy-5-(all-trans-hexaprenyl)benzoic acid into 2-methoxy-6-(all-trans-hexaprenyl)phenol during ubiquinone biosynthesis. May play a role in organizing a multi-subunit COQ enzyme complex required for coenzyme Q biosynthesis. Required for steady-state levels of COQ3, COQ4, COQ6, COQ7 and COQ9 polypeptides. The polypeptide is Ubiquinone biosynthesis protein COQ4, mitochondrial (Saccharomyces cerevisiae (strain ATCC 204508 / S288c) (Baker's yeast)).